The chain runs to 507 residues: Maturase K (507 aa).

It belongs to the intron maturase 2 family. MatK subfamily.

The protein localises to the plastid. The protein resides in the chloroplast. Usually encoded in the trnK tRNA gene intron. Probably assists in splicing its own and other chloroplast group II introns. This is Maturase K from Robinia pseudoacacia (Black locust).